The sequence spans 89 residues: Small ribosomal subunit protein uS15 (89 aa).

The protein belongs to the universal ribosomal protein uS15 family. In terms of assembly, part of the 30S ribosomal subunit. Forms a bridge to the 50S subunit in the 70S ribosome, contacting the 23S rRNA.

In terms of biological role, one of the primary rRNA binding proteins, it binds directly to 16S rRNA where it helps nucleate assembly of the platform of the 30S subunit by binding and bridging several RNA helices of the 16S rRNA. Forms an intersubunit bridge (bridge B4) with the 23S rRNA of the 50S subunit in the ribosome. This chain is Small ribosomal subunit protein uS15, found in Levilactobacillus brevis (strain ATCC 367 / BCRC 12310 / CIP 105137 / JCM 1170 / LMG 11437 / NCIMB 947 / NCTC 947) (Lactobacillus brevis).